A 341-amino-acid polypeptide reads, in one-letter code: Probable cytosolic iron-sulfur protein assembly protein Ciao1 (341 aa).

WD repeat units lie at residues 12-51, 58-97, 102-141, 151-190, 197-236, 255-294, and 305-341; these read GHAG…RWVA, GHTR…FECN, GHDN…DQED, GHTQ…SEWE, SHSS…NALG, YHSR…DRNE, and AHSQ…VDAD.

Belongs to the WD repeat CIA1 family.

In terms of biological role, essential component of the cytosolic iron-sulfur (Fe/S) protein assembly machinery. Required for the maturation of extramitochondrial Fe/S proteins. This is Probable cytosolic iron-sulfur protein assembly protein Ciao1 from Anopheles gambiae (African malaria mosquito).